Consider the following 182-residue polypeptide: Large ribosomal subunit protein uL5 (182 aa).

Belongs to the universal ribosomal protein uL5 family. As to quaternary structure, part of the 50S ribosomal subunit; part of the 5S rRNA/L5/L18/L25 subcomplex. Contacts the 5S rRNA and the P site tRNA. Forms a bridge to the 30S subunit in the 70S ribosome.

Its function is as follows. This is one of the proteins that bind and probably mediate the attachment of the 5S RNA into the large ribosomal subunit, where it forms part of the central protuberance. In the 70S ribosome it contacts protein S13 of the 30S subunit (bridge B1b), connecting the 2 subunits; this bridge is implicated in subunit movement. Contacts the P site tRNA; the 5S rRNA and some of its associated proteins might help stabilize positioning of ribosome-bound tRNAs. The chain is Large ribosomal subunit protein uL5 from Nostoc punctiforme (strain ATCC 29133 / PCC 73102).